Here is a 433-residue protein sequence, read N- to C-terminus: Probable M18 family aminopeptidase 2 (433 aa).

Residues H84, H161, and H409 each contribute to the Zn(2+) site.

This sequence belongs to the peptidase M18 family. The cofactor is Zn(2+).

The protein is Probable M18 family aminopeptidase 2 (apeB) of Clostridium acetobutylicum (strain ATCC 824 / DSM 792 / JCM 1419 / IAM 19013 / LMG 5710 / NBRC 13948 / NRRL B-527 / VKM B-1787 / 2291 / W).